We begin with the raw amino-acid sequence, 460 residues long: C4-dicarboxylate transport protein (460 aa).

A run of 9 helical transmembrane segments spans residues 20-40 (SLYF…HFYP), 56-76 (LIKM…IAGM), 88-108 (YALL…LIVV), 153-173 (IVGA…VIFG), 200-220 (IINM…AFTI), 234-254 (LMIC…GAIC), 301-321 (VVGL…SIYL), 342-362 (ITLL…TGSG), and 364-384 (IVLA…LALI). The disordered stretch occupies residues 438–460 (PEDDLGVAEGPTPANAVNTTKTV).

The protein belongs to the dicarboxylate/amino acid:cation symporter (DAACS) (TC 2.A.23) family.

The protein resides in the cell inner membrane. Its function is as follows. Responsible for the transport of dicarboxylates such as succinate, fumarate, and malate from the periplasm across the membrane. The sequence is that of C4-dicarboxylate transport protein from Pseudomonas savastanoi pv. phaseolicola (strain 1448A / Race 6) (Pseudomonas syringae pv. phaseolicola (strain 1448A / Race 6)).